The chain runs to 1153 residues: Myosin-3 (1153 aa).

The Myosin N-terminal SH3-like domain occupies 104–153; that stretch reads KKVLQFWVQLPNGNWELGKIMSTSGEESVIVVTEGKVLKVKSETLVPANP. Positions 157–829 constitute a Myosin motor domain; the sequence is DGVDDLMQLS…QIGVLEDTRN (673 aa). Residues 248 to 255 and 296 to 304 contribute to the ATP site; these read GESGAGKT and NDNSSRFGK. 2 actin-binding regions span residues 581-615 and 709-731; these read LFEKKPLGLLSLLDEESTFPNGTDLTLANKLKQHL and LFQLMQRLGNTTPHFIRCIKPNN. IQ domains are found at residues 831 to 860, 854 to 883, and 903 to 932; these read TLHGILRLQSYFRGHQARCRLKELKTGITI, LKTGITILQSFVRGEKMRKEYTELLQRHRA, and TVDASAVIQSAIRGELVRRCAGDIGWLSSG. The stretch at 948-996 forms a coiled coil; it reads YLSDLQRRVLRTEAALREKEEENDILRQRVQQYDNRWSEYETKMKSMEE. Residues 1020-1050 are disordered; that stretch reads DSARNSDASVNASDATDLDSGGSHYQMGHGR. Polar residues predominate over residues 1024 to 1033; it reads NSDASVNASD.

The protein belongs to the TRAFAC class myosin-kinesin ATPase superfamily. Myosin family. Plant myosin class VIII subfamily. In terms of assembly, homodimer.

Functionally, myosin heavy chain that is required for the cell cycle-regulated transport of various organelles and proteins for their segregation. Functions by binding with its tail domain to receptor proteins on organelles and exerting force with its N-terminal motor domain against actin filaments, thereby transporting its cargo along polarized actin cables. The chain is Myosin-3 (VIII-A) from Arabidopsis thaliana (Mouse-ear cress).